The following is a 90-amino-acid chain: Small ribosomal subunit protein bS20 (90 aa).

The protein belongs to the bacterial ribosomal protein bS20 family.

In terms of biological role, binds directly to 16S ribosomal RNA. The polypeptide is Small ribosomal subunit protein bS20 (Nautilia profundicola (strain ATCC BAA-1463 / DSM 18972 / AmH)).